The chain runs to 230 residues: Thymidylate kinase (230 aa).

20–27 (GGEGAGKS) lines the ATP pocket.

This sequence belongs to the thymidylate kinase family.

It catalyses the reaction dTMP + ATP = dTDP + ADP. Its function is as follows. Phosphorylation of dTMP to form dTDP in both de novo and salvage pathways of dTTP synthesis. This Rhodopseudomonas palustris (strain ATCC BAA-98 / CGA009) protein is Thymidylate kinase.